A 637-amino-acid polypeptide reads, in one-letter code: tRNA 5-methylaminomethyl-2-thiouridine biosynthesis bifunctional protein MnmC (637 aa).

Residues 1-231 (MPIDPARLAF…KRQMCRGRHR (231 aa)) form a tRNA (mnm(5)s(2)U34)-methyltransferase region. The interval 250–637 (IGAGLAGSST…RPARGMTREG (388 aa)) is FAD-dependent cmnm(5)s(2)U34 oxidoreductase.

The protein in the N-terminal section; belongs to the methyltransferase superfamily. tRNA (mnm(5)s(2)U34)-methyltransferase family. It in the C-terminal section; belongs to the DAO family. FAD is required as a cofactor.

It localises to the cytoplasm. The catalysed reaction is 5-aminomethyl-2-thiouridine(34) in tRNA + S-adenosyl-L-methionine = 5-methylaminomethyl-2-thiouridine(34) in tRNA + S-adenosyl-L-homocysteine + H(+). In terms of biological role, catalyzes the last two steps in the biosynthesis of 5-methylaminomethyl-2-thiouridine (mnm(5)s(2)U) at the wobble position (U34) in tRNA. Catalyzes the FAD-dependent demodification of cmnm(5)s(2)U34 to nm(5)s(2)U34, followed by the transfer of a methyl group from S-adenosyl-L-methionine to nm(5)s(2)U34, to form mnm(5)s(2)U34. In Aromatoleum aromaticum (strain DSM 19018 / LMG 30748 / EbN1) (Azoarcus sp. (strain EbN1)), this protein is tRNA 5-methylaminomethyl-2-thiouridine biosynthesis bifunctional protein MnmC.